A 470-amino-acid polypeptide reads, in one-letter code: Putative multidrug resistance protein MdtD (470 aa).

Residues 1-11 (MTELPDNTRWQ) are Periplasmic-facing. Residues 12–32 (LWIVALGFFMQSLDTTIVNTA) form a helical membrane-spanning segment. Residues 33–48 (LPSMAKSLGESPLHMH) are Cytoplasmic-facing. A helical membrane pass occupies residues 49 to 69 (MVVVSYVLTVAVMLPASGWLA). Residues 70 to 76 (DKIGVRN) are Periplasmic-facing. Residues 77–97 (IFFAAIVLFTLGSLFCALSGT) form a helical membrane-spanning segment. Residues 98-101 (LNQL) are Cytoplasmic-facing. The chain crosses the membrane as a helical span at residues 102 to 124 (VLARVLQGVGGAMMVPVGRLTVM). Residues 125 to 137 (KIVPRAQYMAAMT) are Periplasmic-facing. The chain crosses the membrane as a helical span at residues 138–158 (FVTLPGQIGPLLGPALGGVLV). At 159–164 (EYASWH) the chain is on the cytoplasmic side. A helical membrane pass occupies residues 165-185 (WIFLINIPVGIVGAMATFMLM). At 186-196 (PNYTIETRRFD) the chain is on the periplasmic side. The chain crosses the membrane as a helical span at residues 197-217 (LPGFLLLAIGMAVLTLALDGS). Topologically, residues 218 to 221 (KSMG) are cytoplasmic. The helical transmembrane segment at 222–242 (ISPWTLAGLAAGGAAAILLYL) threads the bilayer. Residues 243 to 262 (LHAKKNSGALFSLRLFRTPT) are Periplasmic-facing. Residues 263 to 283 (FSLGLLGSFAGRIGSGMLPFM) form a helical membrane-spanning segment. Residues 284-285 (TP) are Cytoplasmic-facing. A helical membrane pass occupies residues 286–306 (VFLQIGLGFSPFHAGLMMIPM). Residues 307 to 341 (VLGSMGMKRIVVQIVNRFGYRRVLVATTLGLALVS) lie on the Periplasmic side of the membrane. Residues 342–362 (LLFMSVALLGWYYLLPLVLLL) form a helical membrane-spanning segment. Residues 363-395 (QGMVNSARFSSMNTLTLKDLPDTLASSGNSLLS) are Cytoplasmic-facing. A helical membrane pass occupies residues 396-416 (MIMQLSMSIGVTIAGMLLGMF). Residues 417 to 430 (GQQHIGIDSSATHH) are Periplasmic-facing. A helical transmembrane segment spans residues 431-451 (VFMYTWLCMAVIIALPAIIFA). The Cytoplasmic portion of the chain corresponds to 452-470 (RVPNDTQQNMVISRRKRSL).

This sequence belongs to the major facilitator superfamily. TCR/Tet family.

Its subcellular location is the cell inner membrane. The chain is Putative multidrug resistance protein MdtD from Salmonella heidelberg (strain SL476).